The sequence spans 158 residues: MSYDYEKTSLTLYRAVFKANYDGDVGRYLHPDKELAEAAEVAPLLHPTFDSPNTPGVPARAPDIVAGRDGLYAPDTGGTSVFDRAGVLRRADGDFVIPDGTDIPPDLKVKQDSYNKRLQATHYTIMPAKPMYREVLMGQLDNFVRNAIRRQWEKARGL.

In terms of assembly, forms a heterotetramer with Tsi2 consisting of two Tse2 dimers and two Tsi2 dimers. Formation of the complex inactivates Tse2 enzymatic activity.

The protein resides in the secreted. Its function is as follows. Toxin secreted by the H1 type VI (H1-T6SS) secretion system into the cytoplasm of recipient cells. Acts likely as a NAD-dependent cytotoxin towards both prokaryotic and eukaryotic cells. In Pseudomonas aeruginosa (strain ATCC 15692 / DSM 22644 / CIP 104116 / JCM 14847 / LMG 12228 / 1C / PRS 101 / PAO1), this protein is Toxin Tse2.